The sequence spans 66 residues: Ocellatin-PT3 (66 aa).

The N-terminal stretch at 1-22 is a signal peptide; sequence MAFLKKSLFLVLFLGLVSLSIC. The propeptide occupies 23 to 39; it reads DEEKRQDEDDDDDDDEE. A Valine amide modification is found at V66.

Expressed by the skin glands.

It localises to the secreted. Functionally, has antibacterial activity against Gram-negative bacterium E.coli ATCC 25922 (MIC=320 uM) but not against S.pneumoniae ATCC 700603, S.choleraesuis ATCC 14028 or Gram-positive bacterium S.aureus ATCC 29313. Shows no hemolytic activity and no cytotoxicity. This Leptodactylus pustulatus (Ceara white-lipped frog) protein is Ocellatin-PT3.